A 504-amino-acid polypeptide reads, in one-letter code: Pyrichalasin C-7 hydroxylase (504 aa).

The N-terminal stretch at 1–17 (MLNSAACIVLAITAVLG) is a signal peptide. Cysteine 449 provides a ligand contact to heme.

The protein belongs to the cytochrome P450 family. Heme is required as a cofactor.

The protein operates within mycotoxin biosynthesis. In terms of biological role, cytochrome P450 monooxygenase; part of the gene cluster that mediates the biosynthesis of the mycotoxin pyrichalasin H, a tyrosine-derived cytochalasan that inhibits the growth of rice seedlings, but also inhibits lymphocyte capping and actin polymerization and alters cell morphology. Pyrichalasin H is indicated as the responsible agent for the genus-specific pathogenicity of M.grisea toward crabgrass. The first step in the pathway is catalyzed by the O-methyltransferase pyiA which methylates free tyrosine to generate the precursor O-methyltyrosine. The hybrid PKS-NRPS pyiS, assisted by the enoyl reductase pyiC, are responsible for fusion of the O-methyltyrosine precursor and the polyketide backbone. The polyketide synthase module (PKS) of pyiS is responsible for the synthesis of the polyketide backbone and the downstream nonribosomal peptide synthetase (NRPS) amidates the carboxyl end of the polyketide with the O-methyltyrosine precursor. As the NRPS A-domain demonstrates substrate tolerance, pyiS can also use phenylalanine, tyrosine and even para-chlorophenylalanine as amino acid precursor, which leads to the production of novel cytochalasans, including halogenated cytochalasans. Because pyiS lacks a designated enoylreductase (ER) domain, the required activity is provided the enoyl reductase pyiC. Reduction by the hydrolyase pyiE leads to 1,5-dihydropyrrolone, which is substrate for dehydration and intra-molecular Diels-Alder cyclization by the Diels-Alderase pyiF to yield the required isoindolone-fused macrocycle. The tailoring cytochrome P450 monooxygenases piyD and piyG catalyze the hydroxylation at C-18 and C-7, respectivily, whereas the short-chain dehydrogenase/reductase pyiH reduces the carbonyl at C-21 in preparation for the transfer of an acetyl group by the acetyltransferase pyiB. These 3 reactions whose order is not clear yet, lead to the production of O-methylpyrichalasin J, a deacetylated pyrichalasin H. Finally, pyiB to converts O-methylpyrichalasin J into the final product pyrichalasin H via acetylation of C-21. This is Pyrichalasin C-7 hydroxylase from Pyricularia grisea (Crabgrass-specific blast fungus).